A 277-amino-acid chain; its full sequence is Carbonyl reductase [NADPH] 3 (277 aa).

S2 carries the N-acetylserine modification. Residues 10 to 34 (VTGA…GDVV), 38 to 42 (RDEAR), 63 to 64 (DI), and N90 each bind NADP(+). S30 is modified (phosphoserine). Residue S140 coordinates substrate. Y194 (proton acceptor) is an active-site residue. 194–198 (YGVSK) is a binding site for NADP(+).

Belongs to the short-chain dehydrogenases/reductases (SDR) family.

It is found in the cytoplasm. It carries out the reaction a secondary alcohol + NADP(+) = a ketone + NADPH + H(+). It catalyses the reaction a quinone + NADPH + H(+) = a quinol + NADP(+). In terms of biological role, catalyzes the NADPH-dependent reduction of carbonyl compounds to their corresponding alcohols. Has low NADPH-dependent oxidoreductase activity. Acts on several orthoquinones, as well as on non-quinone compounds, such as isatin or on the anticancer drug oracin. Best substrates for CBR3 is 1,2- naphthoquinone, hence could play a role in protection against cytotoxicity of exogenous quinones. Exerts activity toward ortho-quinones but not paraquinones. No endogenous substrate for CBR3 except isatin has been identified. The protein is Carbonyl reductase [NADPH] 3 of Rattus norvegicus (Rat).